The following is a 1087-amino-acid chain: Synaptopodin-2 (1087 aa).

Positions 6 to 88 constitute a PDZ domain; that stretch reads FICISMTGGA…SLHLLVKRPS (83 aa). 3 disordered regions span residues 24–52, 88–112, and 207–272; these read GKEE…EGDE, SSGT…HEGP, and GPIV…AGLP. Basic and acidic residues predominate over residues 101–112; the sequence is TTNHQHLTHEGP. 2 stretches are compositionally biased toward polar residues: residues 207 to 230 and 246 to 255; these read GPIV…SQLE and TSLTSSTSSG. A phosphoserine mark is found at Ser-300, Ser-319, and Ser-320. Positions 320-359 are disordered; it reads SEGTEHGEDQRSGKDQSRPHKHRARHARLRRSESLSEKQV. A compositionally biased stretch (basic and acidic residues) spans 322–337; the sequence is GTEHGEDQRSGKDQSR. At Thr-323 the chain carries Phosphothreonine. Basic residues predominate over residues 338 to 348; sequence PHKHRARHARL. The segment covering 349–359 has biased composition (basic and acidic residues); that stretch reads RRSESLSEKQV. The short motif at 388–396 is the Nuclear localization signal element; that stretch reads KKRRRRARK. Phosphoserine occurs at positions 540, 541, 543, and 546. The segment at 551–557 is interaction with YWHAB; the sequence is RSLASVP. Position 555 is a phosphoserine; by PKA (Ser-555). 2 disordered regions span residues 581-817 and 832-863; these read AKPF…ALNL and NYTP…GMSG. Ser-596 carries the post-translational modification Phosphoserine. The interval 599-804 is interaction with YWHAB; the sequence is RSVTSPISDF…AVSSIKIAQP (206 aa). The residue at position 602 (Thr-602) is a Phosphothreonine; by PKA and CaMK2. Ser-603 carries the phosphoserine modification. Composition is skewed to pro residues over residues 609-622 and 636-647; these read PAPP…PPPE and AQPPPWPQPAPW. Residues 611 to 614 carry the PPPY motif motif; the sequence is PPPY. Tyr-614 carries the post-translational modification Phosphotyrosine. Phosphoserine is present on Ser-618. The interval 656-796 is F-actin binding; that stretch reads SEQIASRDER…PPNPPQVTAV (141 aa). The interval 656 to 909 is F-actin bundling activity; that stretch reads SEQIASRDER…LPASWKYSSN (254 aa). 2 interaction with ACTN2 regions span residues 656 to 917 and 894 to 1087; these read SEQI…PPVA and QSPT…VVEE. Phosphoserine is present on residues Ser-697 and Ser-719. The segment at 740–893 is actin binding; it reads AKQKTPPPVA…DTVQAHTVRA (154 aa). Thr-744 bears the Phosphothreonine mark. The span at 751-777 shows a compositional bias: low complexity; the sequence is KPAVKSPSSSQPVAPVSPVWSPGVAPA. A phosphoserine mark is found at Ser-767 and Ser-771. The span at 781–797 shows a compositional bias: polar residues; that stretch reads AFSTSNPPNPPQVTAVS. The segment at 803 to 1087 is interaction with FLNC; sequence QPAAPPARPA…QVWKPSVVEE (285 aa). Phosphoserine is present on residues Ser-895, Ser-899, and Ser-903. 3 disordered regions span residues 930–952, 970–1012, and 1037–1060; these read AIKS…KKPL, FTFQ…PTNA, and PVSA…STSY. Positions 993–1012 are interaction with ZYX; sequence PAMKQALPPRQANVGSPTNA. Ser-1008 and Ser-1050 each carry phosphoserine. Residues 1037–1051 show a composition bias toward low complexity; that stretch reads PVSASPVPVSVPTSP.

It belongs to the synaptopodin family. As to quaternary structure, may self-associate in muscle cells under oxidative stress. Binds F-actin. Interacts with ACTN2; ACTN2 is proposed to anchor SYOP2 at Z lines in mature myocytes. Interacts with AKAP6, PPP3CA and CAMK2A. Interacts (phosphorylated form) with YWHAB; YWHAB competes with ACTN2 for interaction with SYNPO2. Interacts with KPNA2; mediating nuclear import of SYNOP2; dependent on interaction with YWHAB. Interacts with IPO13; may be implicated in SYNOP2 nuclear import. Interacts with ZYX, FLNC, ILK. Interacts with BAG3 (via WW 1 domain). May associate with the CASA complex consisting of HSPA8, HSPB8 and BAG3. Interacts with VPS18. Post-translationally, phosphorylated by PKA, and by CaMK2 at multiple sites. Dephosphorylated by calcineurin at Ser-555 and Thr-602; abrogating interaction with YWHAB and impairing nuclear import. As to expression, expressed in skeletal muscle, heart, colon, stomach, uterus and lung. Expression is restricted to muscle cell layers in colon, uterus and stomach.

It localises to the nucleus. Its subcellular location is the cytoplasm. The protein localises to the myofibril. The protein resides in the sarcomere. It is found in the z line. It localises to the cell junction. Its subcellular location is the focal adhesion. Its function is as follows. Has an actin-binding and actin-bundling activity. Can induce the formation of F-actin networks. At the sarcomeric Z lines is proposed to act as adapter protein that links nascent myofibers to the sarcolemma via ZYX and may play a role in early assembly and stabilization of the Z lines. Involved in autophagosome formation. May play a role in chaperone-assisted selective autophagy (CASA) involved in Z lines maintenance in striated muscle under mechanical tension; may link the client-processing CASA chaperone machinery to a membrane-tethering and fusion complex providing autophagosome membranes. Involved in regulation of cell migration. May be a tumor suppressor. This is Synaptopodin-2 (Synpo2) from Mus musculus (Mouse).